Here is a 538-residue protein sequence, read N- to C-terminus: Spindle pole body protein CSA6 (538 aa).

2 disordered regions span residues 1-31 (MEDS…TSDL) and 57-129 (QNIS…KYQD). 2 stretches are compositionally biased toward basic and acidic residues: residues 18–30 (PEIK…KTSD) and 57–68 (QNISDSEHDLTP). 2 stretches are compositionally biased toward polar residues: residues 86–96 (KFSSSIPQKPT) and 104–122 (TSPT…SGPN). The stretch at 144-237 (KQEQNLKLEN…RNERDELVKD (94 aa)) forms a coiled coil. The span at 304–323 (KKISEPSAAVEKDTTSEDKT) shows a compositional bias: basic and acidic residues. 2 disordered regions span residues 304-338 (KKIS…TPRM) and 355-458 (SSNN…STKY). Composition is skewed to polar residues over residues 355–392 (SSNN…SAAY) and 407–425 (TNFY…QSSQ). Positions 426–444 (SDERPETFELPHVAKDHWL) are enriched in basic and acidic residues. Residues 446-457 (RPTSERSTQSTK) are compositionally biased toward polar residues.

It is found in the cytoplasm. Its subcellular location is the cytoskeleton. The protein resides in the microtubule organizing center. The protein localises to the spindle pole body. In terms of biological role, plays a role in mitotic spindle pole body organization, possibly at the point of spindle pole body separation. Required for mitotic exit. The protein is Spindle pole body protein CSA6 of Candida albicans (strain SC5314 / ATCC MYA-2876) (Yeast).